The chain runs to 705 residues: Putative membrane protein SCO0839 (705 aa).

A run of 12 helical transmembrane segments spans residues tryptophan 16–tyrosine 36, glycine 177–valine 197, leucine 202–valine 222, valine 237–threonine 257, serine 281–leucine 301, isoleucine 316–leucine 336, isoleucine 373–serine 393, leucine 529–leucine 549, leucine 554–phenylalanine 574, valine 587–methionine 607, leucine 627–alanine 647, and leucine 648–leucine 668.

The protein belongs to the resistance-nodulation-cell division (RND) (TC 2.A.6) family. MmpL subfamily.

It localises to the cell membrane. The sequence is that of Putative membrane protein SCO0839 from Streptomyces coelicolor (strain ATCC BAA-471 / A3(2) / M145).